The sequence spans 183 residues: Intraflagellar transport protein 27 homolog (183 aa).

Residues 12 to 19 (GAPTVGKT), 63 to 67 (DVSGQ), and 120 to 123 (NKSD) contribute to the GTP site.

It belongs to the small GTPase superfamily. Rab family. In terms of assembly, component of the IFT complex B.

It is found in the cell projection. It localises to the cilium. Its subcellular location is the flagellum. Small GTPase-like component of the intraflagellar transport (IFT) complex B required for both anterograde and retrograde intraflagellar transport. May be involved in cargo loading of the retrograde transport. The protein is Intraflagellar transport protein 27 homolog of Trypanosoma brucei brucei (strain 927/4 GUTat10.1).